The following is a 117-amino-acid chain: Immunoglobulin lambda variable 10-54 (117 aa).

Positions 1–21 (MPWALLLLTLLTHSAVSVVQA) are cleaved as a signal peptide. The tract at residues 20-43 (QAGLTQPPSVSKGLRQTATLTCTG) is framework-1. One can recognise an Ig-like domain in the interval 22-117 (GLTQPPSVSK…CSALDSSLSA (96 aa)). A disulfide bridge connects residues Cys-41 and Cys-108. A complementarity-determining-1 region spans residues 44–52 (NSNIVGNQG). The tract at residues 53–69 (AAWLQQHQGHPPKLLSY) is framework-2. The complementarity-determining-2 stretch occupies residues 70–72 (RNN). Positions 73–108 (NRPSGISERFSASRSGNTASLTITGLQPEDEADYYC) are framework-3. The complementarity-determining-3 stretch occupies residues 109–117 (SALDSSLSA).

As to quaternary structure, immunoglobulins are composed of two identical heavy chains and two identical light chains; disulfide-linked.

It is found in the secreted. The protein localises to the cell membrane. Functionally, v region of the variable domain of immunoglobulin light chains that participates in the antigen recognition. Immunoglobulins, also known as antibodies, are membrane-bound or secreted glycoproteins produced by B lymphocytes. In the recognition phase of humoral immunity, the membrane-bound immunoglobulins serve as receptors which, upon binding of a specific antigen, trigger the clonal expansion and differentiation of B lymphocytes into immunoglobulins-secreting plasma cells. Secreted immunoglobulins mediate the effector phase of humoral immunity, which results in the elimination of bound antigens. The antigen binding site is formed by the variable domain of one heavy chain, together with that of its associated light chain. Thus, each immunoglobulin has two antigen binding sites with remarkable affinity for a particular antigen. The variable domains are assembled by a process called V-(D)-J rearrangement and can then be subjected to somatic hypermutations which, after exposure to antigen and selection, allow affinity maturation for a particular antigen. The sequence is that of Immunoglobulin lambda variable 10-54 from Homo sapiens (Human).